Reading from the N-terminus, the 140-residue chain is Sex-regulated protein janus-B (140 aa).

Residue Arg-42 participates in substrate binding. His-69 acts as the Proton acceptor in catalysis. A substrate-binding site is contributed by 110-112 (CKT).

This sequence belongs to the janus family.

In terms of biological role, janA and janB regulate somatic sex differentiation. This chain is Sex-regulated protein janus-B (janB), found in Drosophila pseudoobscura pseudoobscura (Fruit fly).